A 426-amino-acid chain; its full sequence is Enolase (426 aa).

Position 163 (Gln163) interacts with (2R)-2-phosphoglycerate. Residue Glu205 is the Proton donor of the active site. Asp242, Glu283, and Asp310 together coordinate Mg(2+). (2R)-2-phosphoglycerate is bound by residues Lys335, Arg364, Ser365, and Lys386. Lys335 acts as the Proton acceptor in catalysis.

The protein belongs to the enolase family. Mg(2+) serves as cofactor.

The protein resides in the cytoplasm. Its subcellular location is the secreted. It localises to the cell surface. The enzyme catalyses (2R)-2-phosphoglycerate = phosphoenolpyruvate + H2O. It participates in carbohydrate degradation; glycolysis; pyruvate from D-glyceraldehyde 3-phosphate: step 4/5. Its function is as follows. Catalyzes the reversible conversion of 2-phosphoglycerate (2-PG) into phosphoenolpyruvate (PEP). It is essential for the degradation of carbohydrates via glycolysis. In Cutibacterium acnes (strain DSM 16379 / KPA171202) (Propionibacterium acnes), this protein is Enolase.